The following is a 140-amino-acid chain: Glycine cleavage system H protein (140 aa).

Residues 22 to 104 (EVVIGITRFA…YGKGWMLRLK (83 aa)) enclose the Lipoyl-binding domain. At lysine 63 the chain carries N6-lipoyllysine.

The protein belongs to the GcvH family. In terms of assembly, the glycine cleavage system is composed of four proteins: P, T, L and H. (R)-lipoate is required as a cofactor.

Functionally, the glycine cleavage system catalyzes the degradation of glycine. The H protein shuttles the methylamine group of glycine from the P protein to the T protein. The protein is Glycine cleavage system H protein of Magnetococcus marinus (strain ATCC BAA-1437 / JCM 17883 / MC-1).